The primary structure comprises 156 residues: Phosphopantetheine adenylyltransferase (156 aa).

T9 provides a ligand contact to substrate. Residues 9–10 (TF) and H17 each bind ATP. K41, L73, and R87 together coordinate substrate. ATP-binding positions include 88–90 (GVR), E98, and 123–129 (WVFVSST).

This sequence belongs to the bacterial CoaD family. As to quaternary structure, homohexamer. The cofactor is Mg(2+).

The protein localises to the cytoplasm. It carries out the reaction (R)-4'-phosphopantetheine + ATP + H(+) = 3'-dephospho-CoA + diphosphate. Its pathway is cofactor biosynthesis; coenzyme A biosynthesis; CoA from (R)-pantothenate: step 4/5. In terms of biological role, reversibly transfers an adenylyl group from ATP to 4'-phosphopantetheine, yielding dephospho-CoA (dPCoA) and pyrophosphate. This Haemophilus influenzae (strain PittEE) protein is Phosphopantetheine adenylyltransferase.